A 127-amino-acid chain; its full sequence is Major sperm protein 10/36/56/76 (127 aa).

Position 2 is an N-acetylalanine (A2). The MSP domain maps to 9–126 (DIQTQPNAKI…RRKNLPIEYN (118 aa)).

In terms of tissue distribution, sperm.

The protein localises to the cell projection. Its subcellular location is the pseudopodium. It localises to the cytoplasm. It is found in the cytoskeleton. Its function is as follows. Central component in molecular interactions underlying sperm crawling. Forms an extensive filament system that extends from sperm villipoda, along the leading edge of the pseudopod. In Caenorhabditis elegans, this protein is Major sperm protein 10/36/56/76 (msp-10).